Consider the following 309-residue polypeptide: Probable nitrogen assimilation transcriptional activator (309 aa).

The HTH lysR-type domain maps to 1–57 (MRLEQLQAFLKVAELGSFQQAALQSEVTQSTISRQIQGLESALKCQLFHRGAQAKLT). Positions 18–38 (FQQAALQSEVTQSTISRQIQG) form a DNA-binding region, H-T-H motif.

It belongs to the LysR transcriptional regulatory family.

Its function is as follows. Seems to regulate utilization of fixed nitrogen by controlling the expression of a certain gene(s) involved in nitrogen metabolism. This Synechocystis sp. (strain ATCC 27184 / PCC 6803 / Kazusa) protein is Probable nitrogen assimilation transcriptional activator (ntcB).